Reading from the N-terminus, the 462-residue chain is Chromosomal replication initiator protein DnaA (462 aa).

Residues 1–84 (MAVSLWQQCI…RFDIGSRPSA (84 aa)) are domain I, interacts with DnaA modulators. The domain II stretch occupies residues 84-125 (APRPVQATAAVERPKFEQNTKPAKTSFNVNSPEPAMAANHRS). A domain III, AAA+ region region spans residues 126-342 (NINRTYQFEN…GALNRVIANA (217 aa)). Residues Gly170, Gly172, Lys173, and Thr174 each coordinate ATP. A domain IV, binds dsDNA region spans residues 343-462 (NFTGRPITID…YANLIRTLSS (120 aa)).

This sequence belongs to the DnaA family. Oligomerizes as a right-handed, spiral filament on DNA at oriC.

It localises to the cytoplasm. Functionally, plays an essential role in the initiation and regulation of chromosomal replication. ATP-DnaA binds to the origin of replication (oriC) to initiate formation of the DNA replication initiation complex once per cell cycle. Binds the DnaA box (a 9 base pair repeat at the origin) and separates the double-stranded (ds)DNA. Forms a right-handed helical filament on oriC DNA; dsDNA binds to the exterior of the filament while single-stranded (ss)DNA is stabiized in the filament's interior. The ATP-DnaA-oriC complex binds and stabilizes one strand of the AT-rich DNA unwinding element (DUE), permitting loading of DNA polymerase. After initiation quickly degrades to an ADP-DnaA complex that is not apt for DNA replication. Binds acidic phospholipids. The protein is Chromosomal replication initiator protein DnaA of Shewanella sediminis (strain HAW-EB3).